The primary structure comprises 679 residues: Recombination repair protein 1 (679 aa).

Residues 1–407 (MPRVKAVKKQ…TKKAKKAETK (407 aa)) form a disordered region. Over residues 45-55 (AKGKPRARKAT) the composition is skewed to basic residues. Over residues 106-116 (ATAEAEPEPKV) the composition is skewed to basic and acidic residues. Thr-133 and Thr-140 each carry phosphothreonine. Ser-142 carries the phosphoserine modification. Basic and acidic residues-rich tracts occupy residues 179-189 (EPPKQRARKEA) and 203-214 (SKEKVQKAETAA). Phosphoserine is present on Ser-258. Over residues 312-347 (KKEGKEPAPGKKQKKSADKENGVVEEEAKPSTETKP) the composition is skewed to basic and acidic residues. The tract at residues 428 to 679 (KICSWNVAGL…HCPITIFFNI (252 aa)) is AP endonuclease. Glu-461 serves as a coordination point for Mg(2+). Residue Tyr-533 is part of the active site. 3 residues coordinate Mg(2+): Asp-572, Asn-574, and Asp-669. Residue Asp-572 is the Proton donor/acceptor of the active site.

The protein belongs to the DNA repair enzymes AP/ExoA family. In terms of assembly, interacts with the zeta DNA polymerase complex; interacts (via the N-terminus) with the accessory subunit PolZ2/Rev7 and also interacts with the catalytic component PolZ1, however the interaction with PolZ1 is likely via PolZ2. The cofactor is Mg(2+). It depends on Mn(2+) as a cofactor.

It localises to the nucleus. The catalysed reaction is Exonucleolytic cleavage in the 3'- to 5'-direction to yield nucleoside 5'-phosphates.. In terms of biological role, plays a role in the cellular response to oxidative stress by promoting DNA repair mechanisms such as base excision repair and possibly homologous recombination repair. Functions as an apurinic/apyrimidinic (AP) endodeoxyribonuclease in the DNA base excision repair (BER) pathway of DNA lesions induced by oxidative and alkylating agents. Likely to initiate repair of AP sites in DNA by catalyzing hydrolytic incision of the phosphodiester backbone immediately adjacent to the damage, generating a single-strand break with 5'-deoxyribose phosphate and 3'-hydroxyl ends. Has a 3'-5' exoribonuclease activity on mismatched deoxyribonucleotides at the 3' termini of nicked or gapped DNA molecules during short-patch BER. Has apurinic endonuclease and double-stranded DNA 3'-exonuclease activities and carries out single-stranded DNA renaturation in a Mg(2+)-dependent manner. Activity is more efficient in purine-rich regions of dsDNA than in pyrimidine-rich regions. In Drosophila melanogaster (Fruit fly), this protein is Recombination repair protein 1.